Consider the following 120-residue polypeptide: Glycine cleavage system H protein (120 aa).

The 83-residue stretch at 20–102 (DGTVGISDHA…YEGGWLFKLD (83 aa)) folds into the Lipoyl-binding domain. The residue at position 61 (lysine 61) is an N6-lipoyllysine.

The protein belongs to the GcvH family. The glycine cleavage system is composed of four proteins: P, T, L and H. Requires (R)-lipoate as cofactor.

Its function is as follows. The glycine cleavage system catalyzes the degradation of glycine. The H protein shuttles the methylamine group of glycine from the P protein to the T protein. The chain is Glycine cleavage system H protein from Deinococcus radiodurans (strain ATCC 13939 / DSM 20539 / JCM 16871 / CCUG 27074 / LMG 4051 / NBRC 15346 / NCIMB 9279 / VKM B-1422 / R1).